The chain runs to 59 residues: Large ribosomal subunit protein bL32 (59 aa).

The disordered stretch occupies residues 1 to 20 (MAVQQNKKSRSRKGMRRSHD). The span at 7–19 (KKSRSRKGMRRSH) shows a compositional bias: basic residues.

The protein belongs to the bacterial ribosomal protein bL32 family.

The protein is Large ribosomal subunit protein bL32 of Nitratidesulfovibrio vulgaris (strain ATCC 29579 / DSM 644 / CCUG 34227 / NCIMB 8303 / VKM B-1760 / Hildenborough) (Desulfovibrio vulgaris).